The primary structure comprises 253 residues: 3-deoxy-manno-octulosonate cytidylyltransferase (253 aa).

The protein belongs to the KdsB family.

It is found in the cytoplasm. The enzyme catalyses 3-deoxy-alpha-D-manno-oct-2-ulosonate + CTP = CMP-3-deoxy-beta-D-manno-octulosonate + diphosphate. It participates in nucleotide-sugar biosynthesis; CMP-3-deoxy-D-manno-octulosonate biosynthesis; CMP-3-deoxy-D-manno-octulosonate from 3-deoxy-D-manno-octulosonate and CTP: step 1/1. Its pathway is bacterial outer membrane biogenesis; lipopolysaccharide biosynthesis. In terms of biological role, activates KDO (a required 8-carbon sugar) for incorporation into bacterial lipopolysaccharide in Gram-negative bacteria. This is 3-deoxy-manno-octulosonate cytidylyltransferase from Acinetobacter baumannii (strain SDF).